The following is a 191-amino-acid chain: Putative glutathione-dependent formaldehyde-activating enzyme (191 aa).

The region spanning 20 to 166 (FAGGNLYCKC…FKAVGLETYD (147 aa)) is the CENP-V/GFA domain. Residues Cys-27, Cys-29, Cys-48, Cys-50, Cys-53, Cys-95, and Cys-98 each contribute to the Zn(2+) site.

It belongs to the Gfa family. Requires Zn(2+) as cofactor.

The enzyme catalyses S-(hydroxymethyl)glutathione = glutathione + formaldehyde. It participates in one-carbon metabolism; formaldehyde degradation; formate from formaldehyde (glutathione route): step 1/3. Its function is as follows. Catalyzes the condensation of formaldehyde and glutathione to S-hydroxymethylglutathione. In Aspergillus terreus (strain NIH 2624 / FGSC A1156), this protein is Putative glutathione-dependent formaldehyde-activating enzyme.